Here is a 234-residue protein sequence, read N- to C-terminus: Ion-translocating oxidoreductase complex subunit E (234 aa).

The next 5 membrane-spanning stretches (helical) occupy residues 62–82, 92–112, 116–136, 151–171, and 205–225; these read LGLG…ISLF, IPIY…LMNA, TLYQ…IIIG, IWDG…LGAL, and SFLL…LLAI.

Belongs to the NqrDE/RnfAE family. The complex is composed of six subunits: RnfA, RnfB, RnfC, RnfD, RnfE and RnfG.

The protein localises to the cell inner membrane. In terms of biological role, part of a membrane-bound complex that couples electron transfer with translocation of ions across the membrane. This chain is Ion-translocating oxidoreductase complex subunit E, found in Haemophilus influenzae (strain PittGG).